The chain runs to 957 residues: Glycine dehydrogenase (decarboxylating) (957 aa).

Lysine 708 is subject to N6-(pyridoxal phosphate)lysine.

It belongs to the GcvP family. The glycine cleavage system is composed of four proteins: P, T, L and H. Pyridoxal 5'-phosphate serves as cofactor.

The enzyme catalyses N(6)-[(R)-lipoyl]-L-lysyl-[glycine-cleavage complex H protein] + glycine + H(+) = N(6)-[(R)-S(8)-aminomethyldihydrolipoyl]-L-lysyl-[glycine-cleavage complex H protein] + CO2. In terms of biological role, the glycine cleavage system catalyzes the degradation of glycine. The P protein binds the alpha-amino group of glycine through its pyridoxal phosphate cofactor; CO(2) is released and the remaining methylamine moiety is then transferred to the lipoamide cofactor of the H protein. This chain is Glycine dehydrogenase (decarboxylating), found in Shigella boydii serotype 18 (strain CDC 3083-94 / BS512).